A 462-amino-acid polypeptide reads, in one-letter code: Mitochondrial-processing peptidase subunit beta (462 aa).

The N-terminal 20 residues, 1–20, are a transit peptide targeting the mitochondrion; the sequence is MFSRTASKFRNTRRLLSTIS. His70 serves as a coordination point for Zn(2+). Glu73 functions as the Proton acceptor in the catalytic mechanism. 2 residues coordinate Zn(2+): His74 and Glu150. The residue at position 243 (Ser243) is a Phosphoserine.

It belongs to the peptidase M16 family. As to quaternary structure, heterodimer of MAS2 (alpha) and MAS1 (beta) subunits, forming the mitochondrial processing protease (MPP) in which MAS2 is involved in substrate recognition and binding and MAS1 is the catalytic subunit. Requires Zn(2+) as cofactor.

It is found in the mitochondrion matrix. The enzyme catalyses Release of N-terminal transit peptides from precursor proteins imported into the mitochondrion, typically with Arg in position P2.. Binding to MAS2 is required for catalytic activity. Inhibited by high levels (&gt; 1uM) of zinc. Inhibited by metal chelators ethylenediaminetetraacetic acid (EDTA) and O-phenanthroline. Catalytic subunit of the essential mitochondrial processing protease (MPP), which cleaves the mitochondrial sequence off newly imported precursors proteins. Preferentially, cleaves after an arginine at position P2. In Saccharomyces cerevisiae (strain ATCC 204508 / S288c) (Baker's yeast), this protein is Mitochondrial-processing peptidase subunit beta.